We begin with the raw amino-acid sequence, 983 residues long: Eukaryotic translation initiation factor 4E transporter (983 aa).

The tract at residues 1 to 22 (MEKSVAETENGDAFLELKKLPT) is disordered. The residue at position 4 (serine 4) is a Phosphoserine. Positions 29 to 35 (YTKEELL) match the YXXXXLphi motif motif. The tract at residues 40-99 (RPYSKQRPSCLSEKYDSDGVWDPEKWHASLYPASGRSSPVESLKKESESDRPSLVRRIAD) is disordered. Positions 52–66 (EKYDSDGVWDPEKWH) are enriched in basic and acidic residues. Phosphoserine occurs at positions 73 and 77. Residues 81 to 99 (SLKKESESDRPSLVRRIAD) show a composition bias toward basic and acidic residues. Phosphoserine is present on residues serine 114, serine 119, serine 135, and serine 137. The interaction with CSDE1 stretch occupies residues 130 to 160 (VSSRRSGSPLEKDSDGLRLLGGRRIGSGRII). The Nuclear localization signal motif lies at 194–210 (RREFGDSKRVFGERRRN). The interval 206-229 (ERRRNDSYTEEEPEWFSAGPTSQS) is disordered. The interval 218–239 (PEWFSAGPTSQSETIELTGFDD) is interaction with DDX6. Phosphoserine occurs at positions 300, 344, 352, and 373. The disordered stretch occupies residues 341–360 (SNPSRSGSRSSSLGSTPHEE). Over residues 344 to 355 (SRSGSRSSSLGS) the composition is skewed to low complexity. Lysine 409 participates in a covalent cross-link: Glycyl lysine isopeptide (Lys-Gly) (interchain with G-Cter in SUMO2). Residue serine 416 is modified to Phosphoserine. Residues 437 to 446 (VEAGLKGLKV) carry the Nuclear export signal motif. The interaction with LSM14A stretch occupies residues 447 to 489 (DQQMKNSTPFMAEHLEETLSAASSNRQLKKDGDMTAFNKLVNT). Lysine 485 carries the N6-acetyllysine modification. Phosphoserine is present on residues serine 563 and serine 586. Disordered regions lie at residues 585–616 (PSPIGFPSGPQQLLGDPFQGMRKPMSPVSAQM), 642–693 (FYQP…MLSP), 708–800 (REKT…VPGT), and 906–951 (LHPP…SSPV). A Nuclear export signal motif is present at residues 612–637 (VSAQMSQLELQQAALEGLALPHDLAV). Residues 651–660 (QVDRTRDGLR) are compositionally biased toward basic and acidic residues. Serine 692 bears the Phosphoserine mark. An interaction with PATL1 region spans residues 694–712 (SFTPTSVIRKMYESREKTK). A compositionally biased stretch (basic and acidic residues) spans 724-734 (DGKEDTQKTSE). Composition is skewed to polar residues over residues 735 to 774 (ENLLSSNPIPNTDQDSSTTNPKLSTLQRSSCSTPLSQTSR) and 910 to 928 (GSSSQAAAISVQTPQNVPS). Serine 751, serine 919, and serine 949 each carry phosphoserine. The interaction with LSM14A stretch occupies residues 938–983 (QLEHRTSQRSSSPVGLAKWFGSDVLQQPLPSMPTKVISVDELEYRQ).

This sequence belongs to the 4E-T/EIF4E-T family. In terms of assembly, interacts (via YXXXXLphi motif) with EIF4E. Interacts (via YXXXXLphi motif) with EIF4E2. Interacts with DDX6. Interacts with CSDE1/UNR. Interacts with CNOT1; promoting association with the CCR4-NOT complex. Interacts with LSM14A; promoting EIF4ENIF1 localization to P-bodies. Interacts with PATL1. Interacts with importin beta only in the presence of importin alpha, suggesting a direct interaction with importin alpha. Interacts with APOBEC3G in an RNA-dependent manner. Phosphorylation by MAPK8/JNK1 and or MAPK9/JNK2 in response to oxidative stress promotes P-body assembly. Phosphorylated during meiotic maturation. As to expression, highly expressed in developing oocytes.

The protein localises to the cytoplasm. The protein resides in the nucleus. Its subcellular location is the PML body. It localises to the nucleus speckle. Its function is as follows. EIF4E-binding protein that regulates translation and stability of mRNAs in processing bodies (P-bodies). Plays a key role in P-bodies to coordinate the storage of translationally inactive mRNAs in the cytoplasm and prevent their degradation. Acts as a binding platform for multiple RNA-binding proteins: promotes deadenylation of mRNAs via its interaction with the CCR4-NOT complex, and blocks decapping via interaction with eIF4E (EIF4E and EIF4E2), thereby protecting deadenylated and repressed mRNAs from degradation. Component of a multiprotein complex that sequesters and represses translation of proneurogenic factors during neurogenesis. Promotes miRNA-mediated translational repression. Involved in mRNA translational repression mediated by the miRNA effector TNRC6B by protecting TNRC6B-targeted mRNAs from decapping and subsequent decay. Required for the formation of P-bodies. Also acts as a nucleoplasmic shuttling protein, which mediates the nuclear import of EIF4E and DDX6 by a piggy-back mechanism. This is Eukaryotic translation initiation factor 4E transporter from Mus musculus (Mouse).